The sequence spans 302 residues: Large ribosomal subunit protein uL4m (302 aa).

It belongs to the universal ribosomal protein uL4 family. As to quaternary structure, component of the mitochondrial ribosome large subunit (39S) which comprises a 16S rRNA and about 50 distinct proteins.

Its subcellular location is the mitochondrion. This Danio rerio (Zebrafish) protein is Large ribosomal subunit protein uL4m (mrpl4).